We begin with the raw amino-acid sequence, 306 residues long: Formimidoylglutamase (306 aa).

The segment covering Met1–Thr13 has biased composition (polar residues). A disordered region spans residues Met1–Tyr36. Mn(2+) is bound by residues Asn123, Asp147, His149, Asp151, Asp234, and Asp236.

Belongs to the arginase family. Requires Mn(2+) as cofactor.

It catalyses the reaction N-formimidoyl-L-glutamate + H2O = formamide + L-glutamate. It functions in the pathway amino-acid degradation; L-histidine degradation into L-glutamate; L-glutamate from N-formimidoyl-L-glutamate (hydrolase route): step 1/1. Functionally, catalyzes the conversion of N-formimidoyl-L-glutamate to L-glutamate and formamide. The sequence is that of Formimidoylglutamase from Halobacterium salinarum (strain ATCC 29341 / DSM 671 / R1).